Consider the following 114-residue polypeptide: Large ribosomal subunit protein bL20 (114 aa).

This sequence belongs to the bacterial ribosomal protein bL20 family.

Binds directly to 23S ribosomal RNA and is necessary for the in vitro assembly process of the 50S ribosomal subunit. It is not involved in the protein synthesizing functions of that subunit. The sequence is that of Large ribosomal subunit protein bL20 from Anaeromyxobacter sp. (strain Fw109-5).